The primary structure comprises 57 residues: uncharacterized protein (57 aa).

Residues 15–37 (GLAGLICIGLTISSGFSGSSILI) traverse the membrane as a helical segment.

It is found in the membrane. This is an uncharacterized protein from Dictyostelium discoideum (Social amoeba).